The following is a 203-amino-acid chain: Holliday junction branch migration complex subunit RuvA (203 aa).

The interval 1-64 is domain I; that stretch reads MIGRLRGIIL…EDAQLLYGFN (64 aa). Residues 65–142 form a domain II region; it reads NKQERTLFKE…KGLHGDLFTP (78 aa). Residues 143 to 154 form a flexible linker region; sequence AVDLVLTSPASP. Residues 155-203 form a domain III region; that stretch reads TSEDAEQEAVAALVALGYKPQEASRMVNKIARPDASSETLIRDALRAAL.

Belongs to the RuvA family. Homotetramer. Forms an RuvA(8)-RuvB(12)-Holliday junction (HJ) complex. HJ DNA is sandwiched between 2 RuvA tetramers; dsDNA enters through RuvA and exits via RuvB. An RuvB hexamer assembles on each DNA strand where it exits the tetramer. Each RuvB hexamer is contacted by two RuvA subunits (via domain III) on 2 adjacent RuvB subunits; this complex drives branch migration. In the full resolvosome a probable DNA-RuvA(4)-RuvB(12)-RuvC(2) complex forms which resolves the HJ.

It localises to the cytoplasm. In terms of biological role, the RuvA-RuvB-RuvC complex processes Holliday junction (HJ) DNA during genetic recombination and DNA repair, while the RuvA-RuvB complex plays an important role in the rescue of blocked DNA replication forks via replication fork reversal (RFR). RuvA specifically binds to HJ cruciform DNA, conferring on it an open structure. The RuvB hexamer acts as an ATP-dependent pump, pulling dsDNA into and through the RuvAB complex. HJ branch migration allows RuvC to scan DNA until it finds its consensus sequence, where it cleaves and resolves the cruciform DNA. This chain is Holliday junction branch migration complex subunit RuvA, found in Salmonella choleraesuis (strain SC-B67).